We begin with the raw amino-acid sequence, 152 residues long: Protein SprT-like (152 aa).

The SprT-like domain occupies 7–148 (QRLVEEVSLQ…GKCKGKLILI (142 aa)). H67 serves as a coordination point for Zn(2+). Residue E68 is part of the active site. Zn(2+) is bound at residue H71.

The protein belongs to the SprT family. Zn(2+) serves as cofactor.

Its subcellular location is the cytoplasm. This chain is Protein SprT-like, found in Bacillus thuringiensis subsp. konkukian (strain 97-27).